The sequence spans 303 residues: Probable cell division protein WhiA (303 aa).

The H-T-H motif DNA-binding region spans 272 to 303 (SIQQIADSIEPPLTKSGVNHRLRKINKIADDL).

This sequence belongs to the WhiA family.

Functionally, involved in cell division and chromosome segregation. The chain is Probable cell division protein WhiA from Streptococcus thermophilus (strain ATCC BAA-250 / LMG 18311).